The chain runs to 180 residues: Shikimate kinase (180 aa).

14–19 (GAGKSC) provides a ligand contact to ATP. Residue Ser-18 participates in Mg(2+) binding. Residues Asp-36, Arg-60, and Gly-82 each contribute to the substrate site. Arg-120 provides a ligand contact to ATP. Residue Arg-139 participates in substrate binding.

This sequence belongs to the shikimate kinase family. As to quaternary structure, monomer. Mg(2+) is required as a cofactor.

The protein resides in the cytoplasm. The catalysed reaction is shikimate + ATP = 3-phosphoshikimate + ADP + H(+). The protein operates within metabolic intermediate biosynthesis; chorismate biosynthesis; chorismate from D-erythrose 4-phosphate and phosphoenolpyruvate: step 5/7. Its function is as follows. Catalyzes the specific phosphorylation of the 3-hydroxyl group of shikimic acid using ATP as a cosubstrate. The sequence is that of Shikimate kinase from Xanthomonas campestris pv. campestris (strain 8004).